Consider the following 501-residue polypeptide: Aldehyde dehydrogenase 1A1 (501 aa).

At serine 2 the chain carries N-acetylserine. Lysine 91 and lysine 128 each carry N6-acetyllysine. NAD(+) is bound by residues 167 to 170 (IPWN), 193 to 196 (KPAE), 226 to 227 (GP), and 246 to 247 (GS). Position 252 is an N6-acetyllysine (lysine 252). Glutamate 269 serves as the catalytic Proton acceptor. Residue 269–271 (ELG) participates in NAD(+) binding. Cysteine 303 functions as the Nucleophile in the catalytic mechanism. Residues 336 to 501 (LTPGATQGPQ…VTVKISQKNS (166 aa)) are mediates interaction with PRMT3. At threonine 337 the chain carries Phosphothreonine. Residue 349–353 (EQYDK) participates in NAD(+) binding. An N6-acetyllysine mark is found at lysine 353 and lysine 367. 400-402 (EIF) contributes to the NAD(+) binding site. Residue lysine 410 is modified to N6-acetyllysine. Residue serine 413 is modified to Phosphoserine. 2 positions are modified to N6-acetyllysine: lysine 419 and lysine 495.

This sequence belongs to the aldehyde dehydrogenase family. In terms of assembly, homotetramer. Interacts with PRMT3; the interaction is direct, inhibits ALDH1A1 aldehyde dehydrogenase activity and is independent of the methyltransferase activity of PRMT3. In terms of processing, the N-terminus is blocked most probably by acetylation.

Its subcellular location is the cytoplasm. It localises to the cytosol. The protein resides in the cell projection. It is found in the axon. It catalyses the reaction an aldehyde + NAD(+) + H2O = a carboxylate + NADH + 2 H(+). The enzyme catalyses all-trans-retinal + NAD(+) + H2O = all-trans-retinoate + NADH + 2 H(+). The catalysed reaction is 9-cis-retinal + NAD(+) + H2O = 9-cis-retinoate + NADH + 2 H(+). It carries out the reaction 11-cis-retinal + NAD(+) + H2O = 11-cis-retinoate + NADH + 2 H(+). It catalyses the reaction 13-cis-retinal + NAD(+) + H2O = 13-cis-retinoate + NADH + 2 H(+). The enzyme catalyses 3-deoxyglucosone + NAD(+) + H2O = 2-dehydro-3-deoxy-D-gluconate + NADH + 2 H(+). The catalysed reaction is (E)-4-hydroxynon-2-enal + NAD(+) + H2O = (E)-4-hydroxynon-2-enoate + NADH + 2 H(+). It carries out the reaction malonaldehyde + NAD(+) + H2O = 3-oxopropanoate + NADH + 2 H(+). It catalyses the reaction hexanal + NAD(+) + H2O = hexanoate + NADH + 2 H(+). The enzyme catalyses propanal + NAD(+) + H2O = propanoate + NADH + 2 H(+). The catalysed reaction is acetaldehyde + NAD(+) + H2O = acetate + NADH + 2 H(+). It carries out the reaction benzaldehyde + NAD(+) + H2O = benzoate + NADH + 2 H(+). It catalyses the reaction 4-aminobutanal + NAD(+) + H2O = 4-aminobutanoate + NADH + 2 H(+). Its pathway is cofactor metabolism; retinol metabolism. Its function is as follows. Cytosolic dehydrogenase that catalyzes the irreversible oxidation of a wide range of aldehydes to their corresponding carboxylic acid. Functions downstream of retinol dehydrogenases and catalyzes the oxidation of retinaldehyde into retinoic acid, the second step in the oxidation of retinol/vitamin A into retinoic acid. This pathway is crucial to control the levels of retinol and retinoic acid, two important molecules which excess can be teratogenic and cytotoxic. Also oxidizes aldehydes resulting from lipid peroxidation like (E)-4-hydroxynon-2-enal/HNE, malonaldehyde and hexanal that form protein adducts and are highly cytotoxic. By participating for instance to the clearance of (E)-4-hydroxynon-2-enal/HNE in the lens epithelium prevents the formation of HNE-protein adducts and lens opacification. Also functions downstream of fructosamine-3-kinase in the fructosamine degradation pathway by catalyzing the oxidation of 3-deoxyglucosone, the carbohydrate product of fructosamine 3-phosphate decomposition, which is itself a potent glycating agent that may react with lysine and arginine side-chains of proteins. Also has an aminobutyraldehyde dehydrogenase activity and is probably part of an alternative pathway for the biosynthesis of GABA/4-aminobutanoate in midbrain, thereby playing a role in GABAergic synaptic transmission. The protein is Aldehyde dehydrogenase 1A1 of Macaca fascicularis (Crab-eating macaque).